A 310-amino-acid chain; its full sequence is Membrane protein insertase YidC 2 (310 aa).

The first 23 residues, 1–23 (MKKTLKRILFSSLSLSMLLLLTG), serve as a signal peptide directing secretion. The N-palmitoyl cysteine moiety is linked to residue Cys-24. A lipid anchor (S-diacylglycerol cysteine) is attached at Cys-24. Transmembrane regions (helical) follow at residues 33–53 (PYGVIWNTLGVPMANLITYFA), 58–78 (LGFGVAIIIVTVIVRVVILPL), 135–155 (FGGIGCLPLLIQMPFFSAIFF), 180–200 (LTVIIAILYFVQSWLSMQGVP), and 219–239 (VFMSISLPASVALYWFIGGIF). Residues 266–310 (NPPKAYKANNARKDVTNSTKATESNQAIITSKKTNRNAGKQKRRG) form a disordered region. Polar residues predominate over residues 281 to 297 (TNSTKATESNQAIITSK). Basic residues predominate over residues 298–310 (KTNRNAGKQKRRG).

The protein belongs to the OXA1/ALB3/YidC family. Type 2 subfamily.

The protein resides in the cell membrane. Its function is as follows. Required for the insertion and/or proper folding and/or complex formation of integral membrane proteins into the membrane. Involved in integration of membrane proteins that insert both dependently and independently of the Sec translocase complex, as well as at least some lipoproteins. The polypeptide is Membrane protein insertase YidC 2 (Streptococcus agalactiae serotype V (strain ATCC BAA-611 / 2603 V/R)).